A 503-amino-acid chain; its full sequence is Lysine--tRNA ligase (503 aa).

Residues Glu414 and Glu421 each coordinate Mg(2+).

Belongs to the class-II aminoacyl-tRNA synthetase family. In terms of assembly, homodimer. Mg(2+) serves as cofactor.

It localises to the cytoplasm. It catalyses the reaction tRNA(Lys) + L-lysine + ATP = L-lysyl-tRNA(Lys) + AMP + diphosphate. This chain is Lysine--tRNA ligase, found in Laribacter hongkongensis (strain HLHK9).